Here is a 283-residue protein sequence, read N- to C-terminus: Pantothenate synthetase (283 aa).

30–37 (MGNLHDGH) contributes to the ATP binding site. Residue H37 is the Proton donor of the active site. A (R)-pantoate-binding site is contributed by Q61. Q61 provides a ligand contact to beta-alanine. 149–152 (GEKD) contributes to the ATP binding site. Q155 contributes to the (R)-pantoate binding site. 186-189 (LSSR) contributes to the ATP binding site.

Belongs to the pantothenate synthetase family. In terms of assembly, homodimer.

The protein resides in the cytoplasm. It catalyses the reaction (R)-pantoate + beta-alanine + ATP = (R)-pantothenate + AMP + diphosphate + H(+). The protein operates within cofactor biosynthesis; (R)-pantothenate biosynthesis; (R)-pantothenate from (R)-pantoate and beta-alanine: step 1/1. Functionally, catalyzes the condensation of pantoate with beta-alanine in an ATP-dependent reaction via a pantoyl-adenylate intermediate. The polypeptide is Pantothenate synthetase (Shigella sonnei (strain Ss046)).